Consider the following 388-residue polypeptide: MNLHEYQAKQLFADYGLPVSKGFACESAQEAMSAADSIGGSQWVVKAQVHAGGRGKAGGVKLVSSKEEIKAFAEKWLGHNLVTYQTDEKGQPVNKILVESCTDIDQELYLGAVMDRGTRRIVFMASTEGGVEIEKVAEETPEKILKAVIDPLVGAQPYQARELAFALGLNSDQVKQFTKIFLGLAKLFQDLDLALLEVNPLVITKGGNLHCLDAKVVVDGNALYRQPRIRDMHDPSQEDPREAHAAKWELNYVALEGNIGCMVNGAGLAMGTMDIVKLHGGAPANFLDVGGGATKERVTEAFKIILSDDNVKAVLVNIFGGIVRCDLIADGIIGAVEEVGVKIPVVVRLEGNNAELGAKKLADSGLNIIAAESLTHAAEAVVKAAEGK.

An ATP-grasp domain is found at 9–244 (KQLFADYGLP…PSQEDPREAH (236 aa)). ATP is bound by residues Lys46, 53–55 (GRG), Glu99, Thr102, and Glu107. Asn199 and Asp213 together coordinate Mg(2+). Substrate-binding positions include Asn264 and 321 to 323 (GIV).

It belongs to the succinate/malate CoA ligase beta subunit family. As to quaternary structure, heterotetramer of two alpha and two beta subunits. The cofactor is Mg(2+).

It catalyses the reaction succinate + ATP + CoA = succinyl-CoA + ADP + phosphate. The catalysed reaction is GTP + succinate + CoA = succinyl-CoA + GDP + phosphate. Its pathway is carbohydrate metabolism; tricarboxylic acid cycle; succinate from succinyl-CoA (ligase route): step 1/1. In terms of biological role, succinyl-CoA synthetase functions in the citric acid cycle (TCA), coupling the hydrolysis of succinyl-CoA to the synthesis of either ATP or GTP and thus represents the only step of substrate-level phosphorylation in the TCA. The beta subunit provides nucleotide specificity of the enzyme and binds the substrate succinate, while the binding sites for coenzyme A and phosphate are found in the alpha subunit. This chain is Succinate--CoA ligase [ADP-forming] subunit beta, found in Hahella chejuensis (strain KCTC 2396).